Here is a 269-residue protein sequence, read N- to C-terminus: Aquaporin-7 (269 aa).

Topologically, residues 1-20 (MAGSVLENIQSVLQKTWVRE) are cytoplasmic. Phosphoserine is present on serine 4. The chain crosses the membrane as a helical span at residues 21–38 (FLAEFLSTYVLMVFGLGS). Residues 39–51 (VAHMVLGERLGSY) lie on the Extracellular side of the membrane. Residues 52–69 (LGVNLGFGFGVTMGIHVA) form a helical membrane-spanning segment. At 70 to 73 (GGIS) the chain is on the cytoplasmic side. An intramembrane region (discontinuously helical) is located at residues 74–87 (GAHMNAAVTFTNCA). The NPA 1 signature appears at 78–80 (NAA). Residues 88–95 (LGRMAWKK) lie on the Cytoplasmic side of the membrane. A helical membrane pass occupies residues 96 to 116 (FPIYVLGQFLGSFLAAATTYL). The Extracellular segment spans residues 117–151 (IFYGAINHYAGGELLVTGPKSTANIFATYLPEHMT). The chain crosses the membrane as a helical span at residues 152-172 (LWRGFVDEVFVTGMLQLCIFA). Residues 173 to 184 (ITDKLNSPALQG) are Cytoplasmic-facing. Residues 185-201 (TEPLMIGILVCVLGVSL) traverse the membrane as a helical segment. Topologically, residues 202 to 205 (GMNT) are extracellular. The segment at residues 206-219 (GYAINPSRDLPPRF) is an intramembrane region (discontinuously helical). Positions 210-212 (NPS) match the NPA 2 motif. Over 220–237 (FTFIAGWGKKVFSAGNNW) the chain is Extracellular. A helical membrane pass occupies residues 238 to 259 (WWVPVVAPLLGAYLGGIVYLGL). Over 260–269 (IHAGIPPQGS) the chain is Cytoplasmic.

The protein belongs to the MIP/aquaporin (TC 1.A.8) family. In terms of assembly, homotetramer; each monomer provides an independent glycerol/water pore. Two homotetramers on opposing membranes can dimerize, forming a cell-cell junction. Interacts with PLIN1. Post-translationally, phosphorylation by PKA could prevent the interaction with PLIN1. As to expression, detected in heart, kidney and testis.

It is found in the cell membrane. It localises to the cytoplasmic vesicle membrane. The protein resides in the lipid droplet. It carries out the reaction glycerol(in) = glycerol(out). The catalysed reaction is H2O(in) = H2O(out). The enzyme catalyses urea(in) = urea(out). Its activity is regulated as follows. Glycerol transport is regulated by pH, with the porin being permeable to glycerol at pH 7.4 but not at pH 5.5. Water permeability, however, is not influenced by pH. Not inhibited by mercury ions. Aquaglyceroporins form homotetrameric transmembrane channels, with each monomer independently mediating glycerol and water transport across the plasma membrane along their osmotic gradient. Could also be permeable to urea. Mediates the efflux of glycerol, formed upon triglyceride hydrolysis, to avoid its accumulation in adipocytes and to make it available to other tissues. In the kidney, mediates the reabsorption of glycerol, preventing its loss in urine, again participating to energy homeostasis. In pancreatic beta cells, it also mediates the efflux of glycerol, regulating its intracellular levels. The protein is Aquaporin-7 of Rattus norvegicus (Rat).